Reading from the N-terminus, the 476-residue chain is Sulfate adenylyltransferase subunit 1 (476 aa).

The 220-residue stretch at 24–243 folds into the tr-type G domain; the sequence is KSLLRFLTCG…VDVEKEKEAG (220 aa). Residues 33–40 are G1; it reads GSVDDGKS. 33 to 40 contributes to the GTP binding site; it reads GSVDDGKS. The interval 91–95 is G2; the sequence is GITID. The interval 112–115 is G3; that stretch reads DTPG. Residues 112–116 and 167–170 contribute to the GTP site; these read DTPGH and NKMD. Residues 167–170 are G4; the sequence is NKMD. A G5 region spans residues 205 to 207; it reads SAL.

The protein belongs to the TRAFAC class translation factor GTPase superfamily. Classic translation factor GTPase family. CysN/NodQ subfamily. In terms of assembly, heterodimer composed of CysD, the smaller subunit, and CysN.

It catalyses the reaction sulfate + ATP + H(+) = adenosine 5'-phosphosulfate + diphosphate. Its pathway is sulfur metabolism; hydrogen sulfide biosynthesis; sulfite from sulfate: step 1/3. Functionally, with CysD forms the ATP sulfurylase (ATPS) that catalyzes the adenylation of sulfate producing adenosine 5'-phosphosulfate (APS) and diphosphate, the first enzymatic step in sulfur assimilation pathway. APS synthesis involves the formation of a high-energy phosphoric-sulfuric acid anhydride bond driven by GTP hydrolysis by CysN coupled to ATP hydrolysis by CysD. This chain is Sulfate adenylyltransferase subunit 1, found in Vibrio vulnificus (strain YJ016).